We begin with the raw amino-acid sequence, 928 residues long: MHLKTGLIFLAICLALQVQGSREIPSKTNHGEAKQLADASGSDKTERTTKRSRVSTIRRIFDMAKHRTKRSPFFSTGVKICPQESVKQILASHQAYYRLRVCQEAVWEAFRIFLDRIPDTSEYQNWVTACQRETFCIFDIGKNFSNSQEHLEIIQRRVKHRTFQERKDEISTDKTGGKKLEDIPSVSTGPPSASLSTYTLVPNGTLLNEIVNETKTPVKELGTNTVPELPAEQMVEFSVTLTDQEYTAELSDPNSPQYRQLAAKFQLQMQKIFEKLPGFKEIHVLGFKQKKEKDGSSSTIARYMVNFERDGSEIKSTADDISTIGSNKVENEKVPLSAKEEREISATKLTVTDLQQLVATALHEDRSLPVDLGTLRFTDEPIKPSSDFDNDIQGMVTIPLAGPDLDDTISAELPLVYPSPITVDQTRDIFVDEFTTGITDLSREIGGPEDFDSNFITSEPAFPTKPSREPPHDRSPDTEDITTDYQRFTVPFSALVSTDSPAKPEDSYLPPPADESDSNDLITDESPTEQVITPAVYTTGSFTLPTFLQATDKDTEAEMKKELVGVTEPLFKEADRDSLSGQAVKMMDELESSGDDILVTTSTYKTLPFLIGSSDLFATQPEVTFAAALPPDQTLLPTVTSPFYSHSVVIDQSPEVPDTLMPAAASALPDRASTGVQDIAAELDGAGVKSTAVLDEAEHGSGYISVQTTEPAEVTQAPTLKYVTTSSMTTAAKGKELVVFFSLRVTNMHFSDDLFNRSSQEYKALEQQFMQLLLPYLQSNLTGFKQLEILNFRNGSVIVNSKMKFARTVPYNITEAVHCVLEDFCDAAAQHLNLEIDSYSLDIEPADQADPCKFMACDEFSKCIMNEWTKEADCLCKPGYASQDGLPCRSLCEMEPHLCDNGGKCELVPGRGAVCRSPDQFTEPGLTS.

Positions 1-20 are cleaved as a signal peptide; that stretch reads MHLKTGLIFLAICLALQVQG. A disordered region spans residues 26-50; that stretch reads SKTNHGEAKQLADASGSDKTERTTK. The span at 29-49 shows a compositional bias: basic and acidic residues; the sequence is NHGEAKQLADASGSDKTERTT. The N-linked (GlcNAc...) asparagine glycan is linked to asparagine 143. Residues 164–182 show a composition bias toward basic and acidic residues; sequence QERKDEISTDKTGGKKLED. Residues 164 to 191 are disordered; that stretch reads QERKDEISTDKTGGKKLEDIPSVSTGPP. N-linked (GlcNAc...) asparagine glycosylation is found at asparagine 203 and asparagine 212. The region spanning 231–356 is the SEA 1 domain; sequence AEQMVEFSVT…TKLTVTDLQQ (126 aa). 2 disordered regions span residues 441-481 and 494-522; these read LSRE…TEDI and ALVS…NDLI. Residues 466–477 are compositionally biased toward basic and acidic residues; that stretch reads PSREPPHDRSPD. The SEA 2 domain occupies 735–848; it reads KELVVFFSLR…YSLDIEPADQ (114 aa). N-linked (GlcNAc...) asparagine glycans are attached at residues asparagine 756 and asparagine 780. The short motif at 785–793 is the Heparin- and hyaluronan-binding element; sequence KQLEILNFR. Residues asparagine 794 and asparagine 812 are each glycosylated (N-linked (GlcNAc...) asparagine).

Post-translationally, highly glycosylated (N- and O-linked carbohydrates and sialic acid). In terms of tissue distribution, abundantly expressed in the retina (at protein level). Localizes to the photoreceptor layer of the interphotoreceptor matrix of the retina (at protein level).

The protein localises to the cell projection. It localises to the cilium. The protein resides in the photoreceptor outer segment. Its subcellular location is the secreted. It is found in the extracellular space. The protein localises to the extracellular matrix. It localises to the interphotoreceptor matrix. The protein resides in the photoreceptor inner segment. Its function is as follows. Chondroitin sulfate-, heparin- and hyaluronan-binding protein. May serve to form a basic macromolecular scaffold comprising the insoluble interphotoreceptor matrix. In Gallus gallus (Chicken), this protein is Interphotoreceptor matrix proteoglycan 1.